A 670-amino-acid chain; its full sequence is tRNA 5-methylaminomethyl-2-thiouridine biosynthesis bifunctional protein MnmC (670 aa).

A tRNA (mnm(5)s(2)U34)-methyltransferase region spans residues 1-242 (MTFSVQHAEI…KRECLSGLKI (242 aa)). The interval 269-670 (IGGGIASLCA…KKWLKGSKVE (402 aa)) is FAD-dependent cmnm(5)s(2)U34 oxidoreductase.

This sequence in the N-terminal section; belongs to the methyltransferase superfamily. tRNA (mnm(5)s(2)U34)-methyltransferase family. The protein in the C-terminal section; belongs to the DAO family. It depends on FAD as a cofactor.

Its subcellular location is the cytoplasm. The enzyme catalyses 5-aminomethyl-2-thiouridine(34) in tRNA + S-adenosyl-L-methionine = 5-methylaminomethyl-2-thiouridine(34) in tRNA + S-adenosyl-L-homocysteine + H(+). Its function is as follows. Catalyzes the last two steps in the biosynthesis of 5-methylaminomethyl-2-thiouridine (mnm(5)s(2)U) at the wobble position (U34) in tRNA. Catalyzes the FAD-dependent demodification of cmnm(5)s(2)U34 to nm(5)s(2)U34, followed by the transfer of a methyl group from S-adenosyl-L-methionine to nm(5)s(2)U34, to form mnm(5)s(2)U34. This Haemophilus influenzae (strain PittEE) protein is tRNA 5-methylaminomethyl-2-thiouridine biosynthesis bifunctional protein MnmC.